The following is a 114-amino-acid chain: Lymphotactin (114 aa).

The signal sequence occupies residues 1-21 (MRLLLLTFLGVCCFAAWVVEG). The cysteines at positions 32 and 69 are disulfide-linked. The segment at 87 to 114 (RASASKSKAETIPTQAQRSASTAVTLTG) is disordered. Polar residues predominate over residues 98-114 (IPTQAQRSASTAVTLTG).

Belongs to the intercrine gamma family.

The protein resides in the secreted. Chemotactic activity for lymphocytes but not for monocytes or neutrophils. In thymus, mediates medullary accumulation of thymic dendritic cells and contributes to regulatoy T cell development, playing a role in self-tolerance establishment. The protein is Lymphotactin (Xcl1) of Rattus norvegicus (Rat).